The following is a 299-amino-acid chain: tRNA dimethylallyltransferase (299 aa).

Glycine 11–threonine 18 serves as a coordination point for ATP. Substrate is bound at residue threonine 13–threonine 18. The tract at residues aspartate 36–glutamine 39 is interaction with substrate tRNA.

It belongs to the IPP transferase family. Monomer. Requires Mg(2+) as cofactor.

The catalysed reaction is adenosine(37) in tRNA + dimethylallyl diphosphate = N(6)-dimethylallyladenosine(37) in tRNA + diphosphate. Catalyzes the transfer of a dimethylallyl group onto the adenine at position 37 in tRNAs that read codons beginning with uridine, leading to the formation of N6-(dimethylallyl)adenosine (i(6)A). The chain is tRNA dimethylallyltransferase from Streptococcus pyogenes serotype M18 (strain MGAS8232).